The primary structure comprises 31 residues: Cyclotide cter-R (31 aa).

Residues 1–31 (GIPCGESCVFIPCTVTALLGCSCKDKVCYKN) constitute a cross-link (cyclopeptide (Gly-Asn)). Intrachain disulfides connect Cys-4–Cys-21, Cys-8–Cys-23, and Cys-13–Cys-28.

Post-translationally, this is a cyclic peptide.

The protein resides in the secreted. Functionally, probably participates in a plant defense mechanism. The chain is Cyclotide cter-R from Clitoria ternatea (Butterfly pea).